The primary structure comprises 359 residues: UDP-3-O-acylglucosamine N-acyltransferase (359 aa).

His253 functions as the Proton acceptor in the catalytic mechanism.

It belongs to the transferase hexapeptide repeat family. LpxD subfamily. As to quaternary structure, homotrimer.

It catalyses the reaction a UDP-3-O-[(3R)-3-hydroxyacyl]-alpha-D-glucosamine + a (3R)-hydroxyacyl-[ACP] = a UDP-2-N,3-O-bis[(3R)-3-hydroxyacyl]-alpha-D-glucosamine + holo-[ACP] + H(+). The protein operates within bacterial outer membrane biogenesis; LPS lipid A biosynthesis. Functionally, catalyzes the N-acylation of UDP-3-O-acylglucosamine using 3-hydroxyacyl-ACP as the acyl donor. Is involved in the biosynthesis of lipid A, a phosphorylated glycolipid that anchors the lipopolysaccharide to the outer membrane of the cell. The protein is UDP-3-O-acylglucosamine N-acyltransferase of Burkholderia cenocepacia (strain ATCC BAA-245 / DSM 16553 / LMG 16656 / NCTC 13227 / J2315 / CF5610) (Burkholderia cepacia (strain J2315)).